Reading from the N-terminus, the 423-residue chain is Growth hormone-releasing hormone receptor (423 aa).

An N-terminal signal peptide occupies residues 1–22; the sequence is MDSGVWAACIFCLLSSLPVALG. Over 23–130 the chain is Extracellular; sequence HVHPECDFIT…DEKSYFSTVR (108 aa). Disulfide bonds link Cys41-Cys64, Cys55-Cys96, and Cys78-Cys112. Residue Asn50 is glycosylated (N-linked (GlcNAc...) asparagine). The chain crosses the membrane as a helical span at residues 131–151; the sequence is IVYTTGHSVSAVALFVAIAIL. Over 152-167 the chain is Cytoplasmic; it reads VALRRLHCPRNYIHSQ. The chain crosses the membrane as a helical span at residues 168 to 188; it reads LFATFILKAGAVFLKDAALFH. The Extracellular portion of the chain corresponds to 189-210; it reads SENTDHCSFSTVLCKVSVATSH. A helical transmembrane segment spans residues 211-231; the sequence is FATMTNFSWLLAEAVYLTCLL. At 232–240 the chain is on the cytoplasmic side; it reads ASTSPSTRR. Residues 241–261 traverse the membrane as a helical segment; the sequence is AFWWLVLAGWGLPLLFTGTWV. Topologically, residues 262–283 are extracellular; that stretch reads GCKLAFEDVACWDLDDSSPYWW. A helical transmembrane segment spans residues 284 to 304; it reads IIKGPIVLSVGVNFGLFLNII. The Cytoplasmic segment spans residues 305–331; it reads RILLRKLEPAQGSLHTQPQYWRLSKST. Residues 332 to 352 traverse the membrane as a helical segment; it reads LLLIPLFGIHYVIFNFLPDSA. Residues 353 to 357 are Extracellular-facing; sequence GLGIR. The helical transmembrane segment at 358-378 threads the bilayer; the sequence is LPLELGLGSFQGFIVAILYCF. The Cytoplasmic segment spans residues 379-423; that stretch reads LNQEVRTEISRRWHGHDPELLPAWRTHAKWAKPSRSRAKVLTTVC.

Belongs to the G-protein coupled receptor 2 family. Pituitary gland. Also detected in the lymphocytes and thymocytes.

It is found in the cell membrane. Its function is as follows. Receptor for GRF, coupled to G proteins which activate adenylyl cyclase. Stimulates somatotroph cell growth, growth hormone gene transcription and growth hormone secretion. The polypeptide is Growth hormone-releasing hormone receptor (GHRHR) (Sus scrofa (Pig)).